A 418-amino-acid chain; its full sequence is Serine--tRNA ligase (418 aa).

228 to 230 (TSE) is a binding site for L-serine. Residues 258-260 (RKE) and Val274 each bind ATP. Glu281 provides a ligand contact to L-serine. An ATP-binding site is contributed by 345 to 348 (EVVS). An L-serine-binding site is contributed by Thr381.

Belongs to the class-II aminoacyl-tRNA synthetase family. Type-1 seryl-tRNA synthetase subfamily. In terms of assembly, homodimer. The tRNA molecule binds across the dimer.

It is found in the cytoplasm. The enzyme catalyses tRNA(Ser) + L-serine + ATP = L-seryl-tRNA(Ser) + AMP + diphosphate + H(+). It carries out the reaction tRNA(Sec) + L-serine + ATP = L-seryl-tRNA(Sec) + AMP + diphosphate + H(+). The protein operates within aminoacyl-tRNA biosynthesis; selenocysteinyl-tRNA(Sec) biosynthesis; L-seryl-tRNA(Sec) from L-serine and tRNA(Sec): step 1/1. Catalyzes the attachment of serine to tRNA(Ser). Is also able to aminoacylate tRNA(Sec) with serine, to form the misacylated tRNA L-seryl-tRNA(Sec), which will be further converted into selenocysteinyl-tRNA(Sec). This Cenarchaeum symbiosum (strain A) protein is Serine--tRNA ligase.